We begin with the raw amino-acid sequence, 272 residues long: uncharacterized protein (272 aa).

The AB hydrolase-1 domain occupies 20–133 (PVLIFIPGAN…PPINTFLPDS (114 aa)).

The protein belongs to the AB hydrolase superfamily.

This is an uncharacterized protein from Staphylococcus aureus (strain MSSA476).